Reading from the N-terminus, the 90-residue chain is Putative regulatory protein cce_4590 (90 aa).

Belongs to the RemA family.

This Crocosphaera subtropica (strain ATCC 51142 / BH68) (Cyanothece sp. (strain ATCC 51142)) protein is Putative regulatory protein cce_4590.